A 601-amino-acid polypeptide reads, in one-letter code: Terpenoid synthase 17 (601 aa).

Residues Asn-354, Asp-358, Asn-497, Thr-501, and Glu-505 each contribute to the Mg(2+) site. The short motif at 354-358 is the DDXXD motif; degenerate element; sequence NDTCD.

The protein belongs to the terpene synthase family. Tpsa subfamily. It depends on Mg(2+) as a cofactor. Mn(2+) serves as cofactor. As to expression, expressed exclusively in flowers.

It localises to the cytoplasm. Its pathway is secondary metabolite biosynthesis; terpenoid biosynthesis. This is Terpenoid synthase 17 (TPS17) from Arabidopsis thaliana (Mouse-ear cress).